The sequence spans 399 residues: Phosphoglycerate kinase (399 aa).

Substrate contacts are provided by residues 22–24 (DLN), Arg37, 60–63 (HFGR), Arg119, and Arg152. ATP contacts are provided by residues Lys202, Glu324, and 354–357 (GGDT).

The protein belongs to the phosphoglycerate kinase family. In terms of assembly, monomer.

The protein localises to the cytoplasm. The enzyme catalyses (2R)-3-phosphoglycerate + ATP = (2R)-3-phospho-glyceroyl phosphate + ADP. The protein operates within carbohydrate degradation; glycolysis; pyruvate from D-glyceraldehyde 3-phosphate: step 2/5. The chain is Phosphoglycerate kinase from Rhizobium meliloti (strain 1021) (Ensifer meliloti).